Consider the following 96-residue polypeptide: Aspartyl/glutamyl-tRNA(Asn/Gln) amidotransferase subunit C (96 aa).

It belongs to the GatC family. Heterotrimer of A, B and C subunits.

It catalyses the reaction L-glutamyl-tRNA(Gln) + L-glutamine + ATP + H2O = L-glutaminyl-tRNA(Gln) + L-glutamate + ADP + phosphate + H(+). The enzyme catalyses L-aspartyl-tRNA(Asn) + L-glutamine + ATP + H2O = L-asparaginyl-tRNA(Asn) + L-glutamate + ADP + phosphate + 2 H(+). In terms of biological role, allows the formation of correctly charged Asn-tRNA(Asn) or Gln-tRNA(Gln) through the transamidation of misacylated Asp-tRNA(Asn) or Glu-tRNA(Gln) in organisms which lack either or both of asparaginyl-tRNA or glutaminyl-tRNA synthetases. The reaction takes place in the presence of glutamine and ATP through an activated phospho-Asp-tRNA(Asn) or phospho-Glu-tRNA(Gln). The polypeptide is Aspartyl/glutamyl-tRNA(Asn/Gln) amidotransferase subunit C (Bacillus velezensis (strain DSM 23117 / BGSC 10A6 / LMG 26770 / FZB42) (Bacillus amyloliquefaciens subsp. plantarum)).